The following is a 731-amino-acid chain: EF-hand calcium-binding domain-containing protein 4B (731 aa).

The segment at 1-45 (MAAPDGRVVSRPQRLGQGSGQGPKGSGACLHPLDSLEQKETQEQT) is disordered. The 36-residue stretch at 84 to 119 (LSLEELEDVFDALDADGNGYLTPQEFTTGFSHFFFS) folds into the EF-hand domain. Ca(2+) is bound by residues Asp-97, Asp-99, Asn-101, Tyr-103, and Glu-108. The stretch at 201–382 (LTRIISQLQE…RERNKHLRDE (182 aa)) forms a coiled coil. The interval 349-540 (MEVYRVTESL…ALCKEESSPS (192 aa)) is proline-rich domain (PRD) which mediates interaction with VAV1. Disordered regions lie at residues 426 to 466 (SEEE…PYPR) and 494 to 528 (CSEE…QPVG). The GTP site is built by Ser-554, Val-556, Gly-557, Lys-558, Thr-559, Ser-560, Ser-571, Pro-572, and Thr-577. A Mg(2+)-binding site is contributed by Thr-559. Residues 572-580 (PGMAATVGI) form a switch-I region. The Mg(2+) site is built by Thr-577 and Asp-600. Residues Gly-603, Asn-658, Lys-659, Asp-661, and Ala-689 each contribute to the GTP site. The switch-II stretch occupies residues 603–619 (GQERYRCITQQFFRKAD). Cys-729 is lipidated: S-geranylgeranyl cysteine.

It belongs to the EFCAB4 family. In terms of assembly, interacts with ORAI1 and STIM1; the interaction is direct and takes place in absence of Ca(2+). Forms a complex with ORAI1 and STIM1 at low concentration of Ca(2+), the complex dissociates at elevated Ca(2+) concentrations. Interacts with ORAI2 and ORAI3. Interacts with DYNC1H1. Interacts with the dynein-dynactin complex in a Ca(2+)-dependent manner. Interacts with VAV1. Mg(2+) serves as cofactor. As to expression, expressed in the Jurkat T-cell line. Expressed in endothelial cells. Expressed in Weibel-Palade bodies (which are P-selectin/SELP negative) in endothelial cells. Expressed in the Jurkat T-cell line.

Its subcellular location is the cytoplasm. The protein resides in the cytoskeleton. It localises to the microtubule organizing center. The protein localises to the cell membrane. It is found in the golgi apparatus membrane. Its subcellular location is the golgi apparatus. The protein resides in the trans-Golgi network membrane. It localises to the vesicle. It catalyses the reaction GTP + H2O = GDP + phosphate + H(+). Ca(2+)-binding protein that plays a key role in store-operated Ca(2+) entry (SOCE) in T-cells by regulating CRAC channel activation. Acts as a cytoplasmic calcium-sensor that facilitates the clustering of ORAI1 and STIM1 at the junctional regions between the plasma membrane and the endoplasmic reticulum upon low Ca(2+) concentration. It thereby regulates CRAC channel activation, including translocation and clustering of ORAI1 and STIM1. Upon increase of cytoplasmic Ca(2+) resulting from opening of CRAC channels, dissociates from ORAI1 and STIM1, thereby destabilizing the ORAI1-STIM1 complex. Functionally, rab GTPase that mediates the trafficking of Weibel-Palade bodies (WPBs) to microtubule organizing center (MTOC) in endothelial cells in response to acute inflammatory stimuli. During histamine (but not thrombin) stimulation of endothelial cells, the dynein-bound form induces retrograde transport of a subset of WPBs along microtubules to the MTOC in a Ca(2+)-independent manner and its GTPase activity is essential for this function. Ca(2+)-regulated dynein adapter protein that activates dynein-mediated transport and dynein-dynactin motility on microtubules and regulates endosomal trafficking of CD47. Acts as an intracellular signaling module bridging two important T-cell receptor (TCR) signaling pathways, Ca(2+)-NFAT and JNK, to affect T-cell activation. In resting T-cells, is predominantly localized near TGN network in a GTP-bound form, upon TCR stimulation, localizes at the immunological synapse via interaction with VAV1 to activate downstream Ca(2+)-NFAT and JNK signaling pathways. Plays a role in T-helper 1 (Th1) cell differentiation and T-helper 17 (Th17) cell effector function. Plays a role in store-operated Ca(2+) entry (SOCE) in T-cells by regulating CRAC channel activation. The sequence is that of EF-hand calcium-binding domain-containing protein 4B from Homo sapiens (Human).